We begin with the raw amino-acid sequence, 491 residues long: Cobyric acid synthase (491 aa).

A GATase cobBQ-type domain is found at 246–432 (RKLIACPILP…VHGLLADAEL (187 aa)). Cys328 functions as the Nucleophile in the catalytic mechanism. Residue His424 is part of the active site.

This sequence belongs to the CobB/CobQ family. CobQ subfamily.

Its pathway is cofactor biosynthesis; adenosylcobalamin biosynthesis. In terms of biological role, catalyzes amidations at positions B, D, E, and G on adenosylcobyrinic A,C-diamide. NH(2) groups are provided by glutamine, and one molecule of ATP is hydrogenolyzed for each amidation. In Novosphingobium aromaticivorans (strain ATCC 700278 / DSM 12444 / CCUG 56034 / CIP 105152 / NBRC 16084 / F199), this protein is Cobyric acid synthase.